We begin with the raw amino-acid sequence, 228 residues long: MCTKRSSLKGSLLLLLLISSLLLSRSVDSLPICPSGSVNCQVSLSDLFDRAVMLSHYIHSLSSEMFNEFDERYAQGRGFITKAINSCHTSSLSTPEDKGQAQQIHHEALLNLVLRVLRSWNEPLYHLVTEVRSMQEAPHTILLKAMEIEEQNKKLLEGMEKIVGQVHPGDRENEVYSVWSGLPSLQMADEDTRLFAFYNLLHCLRRDSHKIDNYLKLLKCRLIHDSNC.

An N-terminal signal peptide occupies residues 1–29; that stretch reads MCTKRSSLKGSLLLLLLISSLLLSRSVDS. A disulfide bond links cysteine 33 and cysteine 40. 3 positions are modified to phosphoserine: serine 55, serine 63, and serine 119. Cystine bridges form between cysteine 87–cysteine 203 and cysteine 220–cysteine 228.

Belongs to the somatotropin/prolactin family. Interacts with PRLR.

It is found in the secreted. Functionally, prolactin acts primarily on the mammary gland by promoting lactation. This is Prolactin (PRL) from Isoodon macrourus (Short-nosed bandicoot).